We begin with the raw amino-acid sequence, 409 residues long: N-acetylglucosamine-6-phosphate deacetylase (409 aa).

A divalent metal cation is bound at residue glutamate 143. 154-155 (AH) lines the substrate pocket. A divalent metal cation contacts are provided by histidine 211 and histidine 232. Substrate contacts are provided by residues 235–236 (NA), arginine 243, and 269–272 (DGIH). Aspartate 294 serves as the catalytic Proton donor/acceptor. Position 328-330 (328-330 (LSG)) interacts with substrate.

It belongs to the metallo-dependent hydrolases superfamily. NagA family. A divalent metal cation serves as cofactor.

The catalysed reaction is N-acetyl-D-glucosamine 6-phosphate + H2O = D-glucosamine 6-phosphate + acetate. Its pathway is amino-sugar metabolism; N-acetylneuraminate degradation. Its function is as follows. Hydrolyzes the N-glycolyl group from N-glycolylglucosamine 6-phosphate (GlcNGc-6-P) in the N-glycolylneuraminic acid (Neu5Gc) degradation pathway. The sequence is that of N-acetylglucosamine-6-phosphate deacetylase (Amdhd2) from Rattus norvegicus (Rat).